A 419-amino-acid polypeptide reads, in one-letter code: tRNA(Ile)-lysidine synthase (419 aa).

31-36 (SGGGDS) contributes to the ATP binding site.

It belongs to the tRNA(Ile)-lysidine synthase family.

It is found in the cytoplasm. The catalysed reaction is cytidine(34) in tRNA(Ile2) + L-lysine + ATP = lysidine(34) in tRNA(Ile2) + AMP + diphosphate + H(+). In terms of biological role, ligates lysine onto the cytidine present at position 34 of the AUA codon-specific tRNA(Ile) that contains the anticodon CAU, in an ATP-dependent manner. Cytidine is converted to lysidine, thus changing the amino acid specificity of the tRNA from methionine to isoleucine. The protein is tRNA(Ile)-lysidine synthase of Ruegeria pomeroyi (strain ATCC 700808 / DSM 15171 / DSS-3) (Silicibacter pomeroyi).